The chain runs to 1111 residues: Lysylphosphatidylglycerol biosynthesis bifunctional protein LysX (1111 aa).

The interval 1-612 is phosphatidylglycerol lysyltransferase; it reads MTLTSPPRTR…VLHHDGTAPD (612 aa). 7 consecutive transmembrane segments (helical) span residues 18 to 38, 60 to 80, 84 to 104, 118 to 138, 152 to 172, 209 to 229, and 308 to 328; these read VPAA…IASV, FPDT…ALAA, IAWW…VADL, VIGL…RPLF, GVLA…LELF, VNAL…IVLF, and AWLA…ASVG. Residues 613–1111 are lysine--tRNA ligase; the sequence is MSGLRTDTAD…TLPFPLARPR (499 aa). Residues 674–747 constitute a DNA-binding region (OB); the sequence is VAGRVLRIRD…GTRSLLVRHW (74 aa). Mg(2+) is bound by residues Asp1023 and Glu1030.

It in the N-terminal section; belongs to the LPG synthetase family. This sequence in the C-terminal section; belongs to the class-II aminoacyl-tRNA synthetase family. The cofactor is Mg(2+).

Its subcellular location is the cell membrane. The enzyme catalyses tRNA(Lys) + L-lysine + ATP = L-lysyl-tRNA(Lys) + AMP + diphosphate. It catalyses the reaction L-lysyl-tRNA(Lys) + a 1,2-diacyl-sn-glycero-3-phospho-(1'-sn-glycerol) = a 1,2-diacyl-sn-glycero-3-phospho-1'-(3'-O-L-lysyl)-sn-glycerol + tRNA(Lys). Functionally, catalyzes the production of L-lysyl-tRNA(Lys)transfer and the transfer of a lysyl group from L-lysyl-tRNA(Lys) to membrane-bound phosphatidylglycerol (PG), which produces lysylphosphatidylglycerol (LPG), one of the components of the bacterial membrane with a positive net charge. LPG synthesis contributes to the resistance to cationic antimicrobial peptides (CAMPs) and likely protects M.tuberculosis against the CAMPs produced by competiting microorganisms (bacteriocins). In fact, the modification of anionic phosphatidylglycerol with positively charged L-lysine results in repulsion of the peptides. This Mycobacterium sp. (strain JLS) protein is Lysylphosphatidylglycerol biosynthesis bifunctional protein LysX (lysX).